The following is a 152-amino-acid chain: Ribosome maturation factor RimP (152 aa).

The protein belongs to the RimP family.

It localises to the cytoplasm. In terms of biological role, required for maturation of 30S ribosomal subunits. This is Ribosome maturation factor RimP from Alteromonas mediterranea (strain DSM 17117 / CIP 110805 / LMG 28347 / Deep ecotype).